We begin with the raw amino-acid sequence, 417 residues long: Serine hydroxymethyltransferase (417 aa).

(6S)-5,6,7,8-tetrahydrofolate is bound by residues Leu121 and 125 to 127 (GHL). Residue Lys229 is modified to N6-(pyridoxal phosphate)lysine. 355–357 (SPF) serves as a coordination point for (6S)-5,6,7,8-tetrahydrofolate.

Belongs to the SHMT family. Homodimer. Pyridoxal 5'-phosphate serves as cofactor.

The protein resides in the cytoplasm. The catalysed reaction is (6R)-5,10-methylene-5,6,7,8-tetrahydrofolate + glycine + H2O = (6S)-5,6,7,8-tetrahydrofolate + L-serine. Its pathway is one-carbon metabolism; tetrahydrofolate interconversion. The protein operates within amino-acid biosynthesis; glycine biosynthesis; glycine from L-serine: step 1/1. Functionally, catalyzes the reversible interconversion of serine and glycine with tetrahydrofolate (THF) serving as the one-carbon carrier. This reaction serves as the major source of one-carbon groups required for the biosynthesis of purines, thymidylate, methionine, and other important biomolecules. Also exhibits THF-independent aldolase activity toward beta-hydroxyamino acids, producing glycine and aldehydes, via a retro-aldol mechanism. This Sodalis glossinidius (strain morsitans) protein is Serine hydroxymethyltransferase.